Here is a 231-residue protein sequence, read N- to C-terminus: uncharacterized protein (231 aa).

The chain crosses the membrane as a helical span at residues 10-30 (SQNIFFIAIVIFILSSVILYH).

The protein resides in the membrane. This is an uncharacterized protein from Rickettsia prowazekii (strain Madrid E).